A 327-amino-acid chain; its full sequence is Guanine nucleotide-binding protein subunit beta-like protein 1 (327 aa).

WD repeat units follow at residues 16–54 (LRGTQSPVHALHFCEGAQAQGRPLLFSGSQSGLVHIWSL), 58–97 (RAVTTLDGHGGQCVTWLQTLPQGRQLLSQGRDLKLCLWDL), 103–145 (AVVD…ILEM), 153–195 (ALKP…LWDV), 200–237 (VCSRIACHEEPVMDLDFDSQKARGISGSAGKALAVWSL), 242–282 (ALQV…VFHW), and 286–323 (QPLAVLAFHSAAVQCVAFTADGLLAAGSKDQRISLWSL).

Ubiquitous. Highly expressed in heart, liver, skeletal muscle, kidney, spleen, thymus and pancreas. Detected at low levels in lung, placenta and brain.

The protein resides in the cytoplasm. It is found in the nucleus. Its function is as follows. Acts as a critical regulator of DNA damage response (DDR) signaling via specifically regulating phosphatidylinositol 3-kinase-related protein kinase (PIKK) family proteins. This is Guanine nucleotide-binding protein subunit beta-like protein 1 from Homo sapiens (Human).